Here is a 496-residue protein sequence, read N- to C-terminus: Cytochrome P450 71D178 (496 aa).

A helical; Signal-anchor for type II membrane protein membrane pass occupies residues 1-21 (MDISISWVVIILLVLSYLILM). A heme-binding site is contributed by Cys-435.

It belongs to the cytochrome P450 family. It depends on heme as a cofactor. Expressed in flowers, leaves and stems, especially in glandular trichomes.

The protein resides in the membrane. It carries out the reaction (4S)-limonene + reduced [NADPH--hemoprotein reductase] + O2 = (1S,5R)-carveol + oxidized [NADPH--hemoprotein reductase] + H2O + H(+). It catalyses the reaction gamma-terpinene + 2 reduced [NADPH--hemoprotein reductase] + 2 O2 = carvacrol + 2 oxidized [NADPH--hemoprotein reductase] + 3 H2O + 2 H(+). The enzyme catalyses gamma-terpinene + 2 reduced [NADPH--hemoprotein reductase] + 2 O2 = thymol + 2 oxidized [NADPH--hemoprotein reductase] + 3 H2O + 2 H(+). The catalysed reaction is (4R)-limonene + reduced [NADPH--hemoprotein reductase] + O2 = (1R,6S)-isopiperitenol + oxidized [NADPH--hemoprotein reductase] + H2O + H(+). The protein operates within secondary metabolite biosynthesis; terpenoid biosynthesis. Involved in the biosynthesis of phenolic monoterpenes natural products thymol and carvacrol which have a broad range of biological activities acting as antimicrobial compounds, insecticides, antioxidants and pharmaceutical agents. Catalyzes the C2- and C3-hydroxylation of gamma-terpinene to produce carvacrol and thymol, respectively. Also mediates the C6-hydroxylation of (4S)-limonene to form carveol and the C3-hydroxylation of (4R)-limonene to generate (+)-trans-isopiperitenol. This chain is Cytochrome P450 71D178, found in Origanum vulgare (Wild marjoram).